A 337-amino-acid chain; its full sequence is MKAAVVEQFKKPLQVKEVEKPKISYGEVLVRIKACGVCHTDLHAAHGDWPVKPKLPLIPGHEGVGVIEEVGPGVTHLKVGDRVGIPWLYSACGHCDYCLSGQETLCERQQNAGYSVDGGYAEYCRAAADYVVKIPDNLSFEEAAPIFCAGVTTYKALKVTGAKPGEWVAIYGIGGLGHVAVQYAKAMGLNVVAVDLGDEKLELAKQLGADLVVNPKHDDAAQWIKEKVGGVHATVVTAVSKAAFESAYKSIRRGGACVLVGLPPEEIPIPIFDTVLNGVKIIGSIVGTRKDLQEALQFAAEGKVKTIVEVQPLENINDVFDRMLKGQINGRVVLKVD.

Residues Cys38, His61, Cys92, Cys95, Cys98, Cys106, and Cys148 each contribute to the Zn(2+) site. NAD(+) is bound by residues 172–177 (GIGGLG), Asp195, Lys200, 260–262 (VGL), and Arg331.

This sequence belongs to the zinc-containing alcohol dehydrogenase family. Zn(2+) serves as cofactor.

It catalyses the reaction a primary alcohol + NAD(+) = an aldehyde + NADH + H(+). The enzyme catalyses a secondary alcohol + NAD(+) = a ketone + NADH + H(+). Substrate inhibition is not observed with any alcohols, and the enzyme-NADH dissociation is not considered to be a rate-limiting step. In terms of biological role, NAD(+)-dependent alcohol dehydrogenase. This Geobacillus stearothermophilus (Bacillus stearothermophilus) protein is Alcohol dehydrogenase (adhT).